A 284-amino-acid chain; its full sequence is 4-diphosphocytidyl-2-C-methyl-D-erythritol kinase (284 aa).

K10 is a catalytic residue. Residue 95–105 (PVAAGLGGGSS) coordinates ATP. The active site involves D137.

It belongs to the GHMP kinase family. IspE subfamily.

It catalyses the reaction 4-CDP-2-C-methyl-D-erythritol + ATP = 4-CDP-2-C-methyl-D-erythritol 2-phosphate + ADP + H(+). Its pathway is isoprenoid biosynthesis; isopentenyl diphosphate biosynthesis via DXP pathway; isopentenyl diphosphate from 1-deoxy-D-xylulose 5-phosphate: step 3/6. Its function is as follows. Catalyzes the phosphorylation of the position 2 hydroxy group of 4-diphosphocytidyl-2C-methyl-D-erythritol. The chain is 4-diphosphocytidyl-2-C-methyl-D-erythritol kinase from Levilactobacillus brevis (strain ATCC 367 / BCRC 12310 / CIP 105137 / JCM 1170 / LMG 11437 / NCIMB 947 / NCTC 947) (Lactobacillus brevis).